A 250-amino-acid chain; its full sequence is Virulence plasmid protein pGP6-D-related protein (250 aa).

This sequence belongs to the UPF0137 (pGP6-D) family.

The chain is Virulence plasmid protein pGP6-D-related protein from Chlamydia pneumoniae (Chlamydophila pneumoniae).